We begin with the raw amino-acid sequence, 478 residues long: Transcript termination protein A18 (478 aa).

One can recognise a Helicase ATP-binding domain in the interval 98–254 (KVELKRPMYV…NDVINVSNSS (157 aa)). 111-118 (LACGFGKT) contacts ATP. Positions 204–207 (DESH) match the DESH box motif. The Helicase C-terminal domain maps to 307–454 (ILDTIIYDFE…IITLAIEKLG (148 aa)).

It belongs to the helicase family. Poxviruses subfamily. As to quaternary structure, interacts with G2. Might be part of a transcription complex composed at least of G2, A18, and H5.

The protein resides in the virion. In terms of biological role, DNA helicase which seems to act as a postreplicative transcription termination factor. Involved in ATP-dependent release of nascent RNA. Forms a stable complex with single-stranded DNA, and to a lesser extent RNA. The polypeptide is Transcript termination protein A18 (Erythrocebus patas (Red guenon)).